The chain runs to 215 residues: UPF0323 lipoprotein jhp_0217 (215 aa).

The first 27 residues, 1–27 (MKKPYRKISDYAIVGGLSALVMVSIVG), serve as a signal peptide directing secretion. Cysteine 28 is lipidated: N-palmitoyl cysteine. Cysteine 28 carries S-diacylglycerol cysteine lipidation. Positions 158–169 (QRTYKSPQAYQR) are enriched in polar residues. The interval 158–215 (QRTYKSPQAYQRSQNSFSKSAPSASSMGTASKGQSGFFGSSRPTSSPAISSGTRGFNA) is disordered. Over residues 170–183 (SQNSFSKSAPSASS) the composition is skewed to low complexity. Polar residues predominate over residues 184 to 195 (MGTASKGQSGFF). The span at 197 to 208 (SSRPTSSPAISS) shows a compositional bias: low complexity.

It belongs to the UPF0323 family.

The protein resides in the cell membrane. In Helicobacter pylori (strain J99 / ATCC 700824) (Campylobacter pylori J99), this protein is UPF0323 lipoprotein jhp_0217.